The following is a 312-amino-acid chain: DNA-directed RNA polymerase subunit alpha (312 aa).

Residues 1–229 are alpha N-terminal domain (alpha-NTD); sequence MLQYQIDRVD…ALFQPLATVT (229 aa). The tract at residues 241–312 is alpha C-terminal domain (alpha-CTD); it reads SAESQIPLEE…ISLPQSRTTA (72 aa).

The protein belongs to the RNA polymerase alpha chain family. In cyanobacteria the RNAP catalytic core is composed of 2 alpha, 1 beta, 1 beta', 1 gamma and 1 omega subunit. When a sigma factor is associated with the core the holoenzyme is formed, which can initiate transcription.

The enzyme catalyses RNA(n) + a ribonucleoside 5'-triphosphate = RNA(n+1) + diphosphate. In terms of biological role, DNA-dependent RNA polymerase catalyzes the transcription of DNA into RNA using the four ribonucleoside triphosphates as substrates. The protein is DNA-directed RNA polymerase subunit alpha of Synechococcus sp. (strain RCC307).